The primary structure comprises 375 residues: Queuine tRNA-ribosyltransferase (375 aa).

The active-site Proton acceptor is aspartate 89. Substrate-binding positions include 89–93, aspartate 143, glutamine 187, and glycine 214; that span reads DSGGF. Residues 245 to 251 are RNA binding; that stretch reads GVGKPED. Aspartate 264 serves as the catalytic Nucleophile. The RNA binding; important for wobble base 34 recognition stretch occupies residues 269–273; the sequence is TRNAR. 4 residues coordinate Zn(2+): cysteine 302, cysteine 304, cysteine 307, and histidine 333.

The protein belongs to the queuine tRNA-ribosyltransferase family. In terms of assembly, homodimer. Within each dimer, one monomer is responsible for RNA recognition and catalysis, while the other monomer binds to the replacement base PreQ1. Zn(2+) serves as cofactor.

The enzyme catalyses 7-aminomethyl-7-carbaguanine + guanosine(34) in tRNA = 7-aminomethyl-7-carbaguanosine(34) in tRNA + guanine. It participates in tRNA modification; tRNA-queuosine biosynthesis. Its function is as follows. Catalyzes the base-exchange of a guanine (G) residue with the queuine precursor 7-aminomethyl-7-deazaguanine (PreQ1) at position 34 (anticodon wobble position) in tRNAs with GU(N) anticodons (tRNA-Asp, -Asn, -His and -Tyr). Catalysis occurs through a double-displacement mechanism. The nucleophile active site attacks the C1' of nucleotide 34 to detach the guanine base from the RNA, forming a covalent enzyme-RNA intermediate. The proton acceptor active site deprotonates the incoming PreQ1, allowing a nucleophilic attack on the C1' of the ribose to form the product. After dissociation, two additional enzymatic reactions on the tRNA convert PreQ1 to queuine (Q), resulting in the hypermodified nucleoside queuosine (7-(((4,5-cis-dihydroxy-2-cyclopenten-1-yl)amino)methyl)-7-deazaguanosine). This chain is Queuine tRNA-ribosyltransferase, found in Aliivibrio salmonicida (strain LFI1238) (Vibrio salmonicida (strain LFI1238)).